The primary structure comprises 195 residues: MGYHFYFDREFGRQAVRVNPGGFAIASADVMLATVLGSCVSVCMFDSAARVGGMNHFMLPGSGNGARNDSLSSLYGVNAMELLINGLLRRGALKWRLRAKLFGGGCVMQSLSDTRIGERNAAFVRAYLDAEGIRSVGGDMLGTRPRRVCYFPSTGRALCKRLVRGSDVADIATSERAYDGDLARRLPVAGSVELF.

Belongs to the CheD family.

It carries out the reaction L-glutaminyl-[protein] + H2O = L-glutamyl-[protein] + NH4(+). In terms of biological role, probably deamidates glutamine residues to glutamate on methyl-accepting chemotaxis receptors (MCPs), playing an important role in chemotaxis. This chain is Probable chemoreceptor glutamine deamidase CheD 2, found in Burkholderia thailandensis (strain ATCC 700388 / DSM 13276 / CCUG 48851 / CIP 106301 / E264).